Here is a 557-residue protein sequence, read N- to C-terminus: Ribonuclease J 2 (557 aa).

Positions 76, 78, 144, and 166 each coordinate Zn(2+). 366 to 370 contacts substrate; that stretch reads HASSH.

It belongs to the metallo-beta-lactamase superfamily. RNA-metabolizing metallo-beta-lactamase-like family. Bacterial RNase J subfamily. Homodimer, may be a subunit of the RNA degradosome. Zn(2+) is required as a cofactor.

It localises to the cytoplasm. Its function is as follows. An RNase that has 5'-3' exonuclease and possibly endoonuclease activity. Involved in maturation of rRNA and in some organisms also mRNA maturation and/or decay. This chain is Ribonuclease J 2, found in Staphylococcus epidermidis (strain ATCC 35984 / DSM 28319 / BCRC 17069 / CCUG 31568 / BM 3577 / RP62A).